The chain runs to 271 residues: Virulence regulon transcriptional activator VirF (271 aa).

Residues 167–265 enclose the HTH araC/xylS-type domain; sequence ERLQKFMEEN…GCTPSQARLT (99 aa). 2 consecutive DNA-binding regions (H-T-H motif) follow at residues 184 to 205 and 232 to 255; these read SKFAREFGMGLTTFKELFGTVY and IVDIAMEAGFSSQSYFTQSYRRRF.

Its function is as follows. Transcriptional activator of the Yersinia virulence regulon. This Yersinia enterocolitica protein is Virulence regulon transcriptional activator VirF (virF).